Consider the following 382-residue polypeptide: Phenylalanine dehydrogenase (382 aa).

Arg-54 provides a ligand contact to NAD(+). Lys-78 contributes to the L-phenylalanine binding site. Lys-90 serves as the catalytic Proton donor/acceptor. Residues Asp-125, Ser-156, Thr-160, Gly-190–Tyr-196, Asp-213–Ile-214, Ala-253–Phe-254, and Ser-274–Asn-276 contribute to the NAD(+) site. Asn-276 provides a ligand contact to L-phenylalanine.

It belongs to the Glu/Leu/Phe/Val dehydrogenases family.

It catalyses the reaction L-phenylalanine + NAD(+) + H2O = 3-phenylpyruvate + NH4(+) + NADH + H(+). Activity is not affected by the metal chelating agent EDTA. Addition of 1 mM Mg(2+) results in 15% increase in activity, while the enzyme is strongly inhibited by 1 mM Fe(3+), Fe(2+), Cu(2+), Zn(2+) and Ag(+). In terms of biological role, catalyzes the reversible NAD(+)-dependent oxidative deamination of L-phenylalanine to phenylpyruvate. Can also catalyze the oxidative deamination of several other amino acids, with much lower efficiency. Shows activity towards various bulky aromatic alpha-keto acids/esters and (S)-amine alcohols. Can catalyze the amination of 3-(2-chlorophenyl)-2-oxopropionic acid (CPOA) to produce 2-chloro-L-phenylalanine (2-Cl-Phe), a chemical compound used in the pharmaceutical and biotechnology industries. Shows a preference for amination over deamination. The sequence is that of Phenylalanine dehydrogenase from Bacillus thermotolerans (Quasibacillus thermotolerans).